The primary structure comprises 796 residues: Protein translocase subunit SecA 2 (796 aa).

ATP contacts are provided by residues Gln84, 102 to 106 (GEGKT), and Asp496.

The protein belongs to the SecA family. In terms of assembly, monomer and homodimer. Part of the essential Sec protein translocation apparatus which comprises SecA, SecYEG and auxiliary proteins SecDF. Other proteins may also be involved.

It is found in the cell membrane. The protein resides in the cytoplasm. The enzyme catalyses ATP + H2O + cellular proteinSide 1 = ADP + phosphate + cellular proteinSide 2.. Part of the Sec protein translocase complex. Interacts with the SecYEG preprotein conducting channel. Has a central role in coupling the hydrolysis of ATP to the transfer of proteins into and across the cell membrane, serving as an ATP-driven molecular motor driving the stepwise translocation of polypeptide chains across the membrane. The polypeptide is Protein translocase subunit SecA 2 (Staphylococcus aureus (strain MRSA252)).